The primary structure comprises 554 residues: Apyrase (554 aa).

An N-terminal signal peptide occupies residues 1-21 (MFKITVFIYVLQLILPSKVHS). Asp-43, His-45, Asp-92, Asn-124, His-224, and His-248 together coordinate a divalent metal cation. Arg-358, Asn-394, Arg-399, Phe-418, Phe-504, and Asp-510 together coordinate AMP.

This sequence belongs to the 5'-nucleotidase family. The cofactor is a divalent metal cation. In terms of tissue distribution, salivary gland (at protein level).

Its subcellular location is the secreted. The catalysed reaction is a ribonucleoside 5'-triphosphate + 2 H2O = a ribonucleoside 5'-phosphate + 2 phosphate + 2 H(+). In terms of biological role, facilitates hematophagy by inhibiting ADP-dependent platelet aggregation in the host. Cleaves adenosine triphosphate (ATP) and adenosine diphosphate (ADP) to adenosine monophosphate (AMP) and inorganic phosphate. Shows potential for antithrombotic activity. Can induce basophil activation. May reduce probing time by facilitating the speed of locating blood. The polypeptide is Apyrase (Tabanus yao (Horsefly)).